Reading from the N-terminus, the 765-residue chain is MAASVVKTPKCPRRGSVKDVAQNAPRTAPTSSKEANWNWWLLLATVFLVTFATRFYKVTEPDHICWDETHFGKMGSWYINRTFFFDVHPPLGKMLIGLSGYLTGYNGTFPFEKPGDKYNETRYQGMRYFCTTLGALIMPMGFDTVYDLTRSHEAALLAAAYLIFDVGLLTLNQYILLDPILLFFMMASVWGMVKVSKSTASGGSYGLRWWLWLFLTGTMLSCTISVKFVGLFVVLLVGLHTATELWLILGDLGQPILETVKQLACRAITLIVWPVLLYILFFYIHLSVLNRSGNGDGFYSSAFQSRLIGNSLYNASMPRDVAYGSLVTIKNHKTGGGYLHSHHHLYPKGSGARQQQVTTYTHKDENNKWLIRPHNKPGPPKGKVQILRHGDLVRLTHMATRRNLHSHNEPAPMTKKHLQVTGYGELGLGDANDVWRVLIVGGKVNETVHTVTSRLKFIHLLQNCALTSSGKQLPKWGFEQQEVSCNPNVRDKNSQWNVEDNEHKLMPSVSFSVYAPGFFARFLESHAVMLQGNAGLKPKEGEVTSRPWQWPINYRGQFFSGSSYRIYLLGNPLIWWSNLVFLALFVTVFLCNAVVQQRRAGFARSAAQNQAQVPDSETVAQDEESEHSTTDICSCCTPAKEIVPKAVPSGSPEAPNPAQSLRAAAWLFLGWMLHYLPFWAMGRVLYFHHYFPALIFNSLLTGVMYNYILRVLPKWIHHVILGLVLSILVYSFAAFSPLAYGMSGPLANEPNSTMYNLKWLSTWEF.

A disordered region spans residues 1 to 31 (MAASVVKTPKCPRRGSVKDVAQNAPRTAPTS). The chain crosses the membrane as a helical span at residues 35-55 (ANWNWWLLLATVFLVTFATRF). N-linked (GlcNAc...) asparagine glycans are attached at residues Asn80, Asn106, and Asn119. 5 consecutive transmembrane segments (helical) span residues 128–148 (YFCT…VYDL), 175–195 (ILLD…MVKV), 206–226 (GLRW…TISV), 228–248 (FVGL…LWLI), and 268–288 (ITLI…HLSV). N-linked (GlcNAc...) asparagine glycans are attached at residues Asn290 and Asn314. 3 MIR domains span residues 318–374 (PRDV…IRPH), 384–440 (VQIL…VLIV), and 445–501 (NETV…VEDN). Asn445 carries an N-linked (GlcNAc...) asparagine glycan. 4 helical membrane passes run 566–586 (IYLL…ALFV), 667–687 (LFLG…VLYF), 689–709 (HYFP…NYIL), and 719–739 (VILG…SPLA). Asn751 is a glycosylation site (N-linked (GlcNAc...) asparagine).

The protein belongs to the glycosyltransferase 39 family. In terms of assembly, interacts with Rt/POMT1. At the cellular blastoderm stage, expression accumulates in the ventrally located mesoderm primordium. At germ band extension, mesoderm expression is seen as stripes of strong expression. A very strong signal is also detected in the invaginating gut. As the germ band retracts, mesodermal expression decays and becomes restricted to somatic muscle precursors.

It is found in the endoplasmic reticulum membrane. It catalyses the reaction a di-trans,poly-cis-dolichyl beta-D-mannosyl phosphate + L-seryl-[protein] = 3-O-(alpha-D-mannosyl)-L-seryl-[protein] + a di-trans,poly-cis-dolichyl phosphate + H(+). The catalysed reaction is a di-trans,poly-cis-dolichyl beta-D-mannosyl phosphate + L-threonyl-[protein] = 3-O-(alpha-D-mannosyl)-L-threonyl-[protein] + a di-trans,poly-cis-dolichyl phosphate + H(+). It functions in the pathway protein modification; protein glycosylation. Rt/POMT1 and tw/POMT2 function as a protein O-mannosyltransferase in association with each other to generate and maintain normal muscle development. In Drosophila melanogaster (Fruit fly), this protein is Protein O-mannosyl-transferase 2 (tw).